The following is a 194-amino-acid chain: DNA replication complex GINS protein PSF3 (194 aa).

The protein belongs to the GINS3/PSF3 family. As to quaternary structure, component of the GINS complex which is a heterotetramer of SLD5, PSF1, PSF2 and PSF3.

The protein localises to the nucleus. In terms of biological role, functions as part of the GINS complex which plays an essential role in the initiation of DNA replication by binding to DNA replication origins and facilitating the assembly of the DNA replication machinery. This chain is DNA replication complex GINS protein PSF3, found in Saccharomyces cerevisiae (strain ATCC 204508 / S288c) (Baker's yeast).